The chain runs to 274 residues: 2,3,4,5-tetrahydropyridine-2,6-dicarboxylate N-succinyltransferase (274 aa).

Substrate-binding residues include Arg-104 and Asp-141.

The protein belongs to the transferase hexapeptide repeat family. As to quaternary structure, homotrimer.

It localises to the cytoplasm. The catalysed reaction is (S)-2,3,4,5-tetrahydrodipicolinate + succinyl-CoA + H2O = (S)-2-succinylamino-6-oxoheptanedioate + CoA. It functions in the pathway amino-acid biosynthesis; L-lysine biosynthesis via DAP pathway; LL-2,6-diaminopimelate from (S)-tetrahydrodipicolinate (succinylase route): step 1/3. The chain is 2,3,4,5-tetrahydropyridine-2,6-dicarboxylate N-succinyltransferase from Enterobacter sp. (strain 638).